Here is a 415-residue protein sequence, read N- to C-terminus: Zinc finger protein ZFMSA12A (415 aa).

The disordered stretch occupies residues 1–36 (MGIQDARWPSEDEETHLLDSSSAEQTRGEKCSDSTP). C2H2-type zinc fingers lie at residues 78-100 (HKCTQCGKCFIYRYELLEHQRLH), 106-129 (YRCSQCGKAFRRTSDLSSHRRTQC), 134-156 (YICIKCGNSFQSIQEKFRHQCVH), 161-183 (FDCSQCGKSFKKMHLLGKHELTH), 189-211 (FTCRQCGKVYPGMSELRSHQKIH), 217-239 (NQCMQCGKFFSSSACLTAHEVRH), 245-267 (QICARCGKAFKNKHDLNLHMRSH), 273-295 (FQCTYCGKRFSVSGNLNIHVRTH), 301-323 (YLCSDCGKAFISAGELQIHRRTH), 329-351 (YKCSVCGRGFTMASKVTLHMRVH), 357-379 (YVCSECGKGFSRGSELKKHSMNH), and 385-407 (YACQLCAKTYTCLNHLKRHLKTH).

The protein resides in the nucleus. The chain is Zinc finger protein ZFMSA12A from Micropterus salmoides (Largemouth bass).